A 70-amino-acid chain; its full sequence is Protein SlyX homolog (70 aa).

The protein belongs to the SlyX family.

The chain is Protein SlyX homolog from Shewanella sp. (strain MR-4).